The primary structure comprises 482 residues: Ribosomal protein S6 kinase beta-2 (482 aa).

A disordered region spans residues 1–26; sequence MAAVFDLDLETEEGSEGEGEPELSPA. Residues 7–21 are compositionally biased toward acidic residues; that stretch reads LDLETEEGSEGEGEP. At Ser-15 the chain carries Phosphoserine. One can recognise a Protein kinase domain in the interval 67-328; the sequence is FELLRVLGKG…AADVQRHPFF (262 aa). Residues 73 to 81 and Lys-99 each bind ATP; that span reads LGKGGYGKV. Asp-194 serves as the catalytic Proton acceptor. The region spanning 329–399 is the AGC-kinase C-terminal domain; sequence RHMNWDDLLA…VAPSVLDSIK (71 aa). A disordered region spans residues 407–482; it reads KLRSPRRLNS…SKRGRGRPGR (76 aa). Phosphoserine occurs at positions 417 and 423. A compositionally biased stretch (pro residues) spans 437-466; it reads PSLPEPTELPLPPLLPPPPPSTTAPLPIRP. A Nuclear localization signal motif is present at residues 471 to 477; that stretch reads KKSKRGR. The span at 471 to 482 shows a compositional bias: basic residues; the sequence is KKSKRGRGRPGR. The residue at position 473 (Ser-473) is a Phosphoserine; by PKC.

This sequence belongs to the protein kinase superfamily. AGC Ser/Thr protein kinase family. S6 kinase subfamily. Phosphorylated and activated by MTOR. Phosphorylation by PKC within the NLS in response to mitogenic stimuli causes cytoplasmic retention.

The protein resides in the cytoplasm. It localises to the nucleus. It catalyses the reaction L-seryl-[protein] + ATP = O-phospho-L-seryl-[protein] + ADP + H(+). The catalysed reaction is L-threonyl-[protein] + ATP = O-phospho-L-threonyl-[protein] + ADP + H(+). In terms of biological role, phosphorylates specifically ribosomal protein S6. Seems to act downstream of mTOR signaling in response to growth factors and nutrients to promote cell proliferation, cell growth and cell cycle progression in an alternative pathway regulated by MEAK7. This chain is Ribosomal protein S6 kinase beta-2 (RPS6KB2), found in Homo sapiens (Human).